A 1222-amino-acid chain; its full sequence is BOS complex subunit NOMO1 (1222 aa).

Residues 1 to 31 (MLVGQGAGPLGPAVVTAAVVLLLSGVGPAHG) form the signal peptide. Topologically, residues 32–1155 (SEDIVVGCGG…NPTRKLPEQD (1124 aa)) are extracellular. N-linked (GlcNAc...) asparagine glycosylation is found at Asn50, Asn218, and Asn618. Residues 1156 to 1176 (IAQGSYIALPLTLLVLLAGYN) form a helical membrane-spanning segment. The Cytoplasmic segment spans residues 1177 to 1222 (HDKLIPLLLQLTSRLQGVRALGQAASDNSGPEDAKRQAKKQKTRRT). Residues 1198-1222 (GQAASDNSGPEDAKRQAKKQKTRRT) are disordered. Ser1205 carries the phosphoserine modification. Over residues 1213–1222 (QAKKQKTRRT) the composition is skewed to basic residues.

Component of the back of Sec61 (BOS) complex, composed of NCLN/Nicalin, NOMO (NOMO1, NOMO2 or NOMO3) and TMEM147. The BOS complex is part of the multi-pass translocon (MPT) complex, composed of three subcomplexes, the GEL complex (composed of RAB5IF/OPTI and TMCO1), the BOS complex (composed of NCLN/Nicalin, NOMO and TMEM147) and the PAT complex (composed of WDR83OS/Asterix and CCDC47). The MPT complex associates with the SEC61 complex. Due to the strong similarity between NOMO1, NOMO2 and NOMO3, similar interaction pattern probably occur for the three gene copies. Expressed in colon tumor tissue and in adjacent normal colonic mucosa.

It is found in the endoplasmic reticulum membrane. Component of the multi-pass translocon (MPT) complex that mediates insertion of multi-pass membrane proteins into the lipid bilayer of membranes. The MPT complex takes over after the SEC61 complex: following membrane insertion of the first few transmembrane segments of proteins by the SEC61 complex, the MPT complex occludes the lateral gate of the SEC61 complex to promote insertion of subsequent transmembrane regions. The protein is BOS complex subunit NOMO1 (NOMO1) of Homo sapiens (Human).